The chain runs to 150 residues: Large ribosomal subunit protein uL15 (150 aa).

Residues 1–15 (MNLSNLQPAEGSTHN) are compositionally biased toward polar residues. The tract at residues 1-53 (MNLSNLQPAEGSTHNQNKRVGRGEGSGKGGTAARGHKGAKSRSGYSKKIGFEG) is disordered. Gly residues predominate over residues 23 to 32 (GEGSGKGGTA).

The protein belongs to the universal ribosomal protein uL15 family. In terms of assembly, part of the 50S ribosomal subunit.

Binds to the 23S rRNA. The chain is Large ribosomal subunit protein uL15 from Flavobacterium johnsoniae (strain ATCC 17061 / DSM 2064 / JCM 8514 / BCRC 14874 / CCUG 350202 / NBRC 14942 / NCIMB 11054 / UW101) (Cytophaga johnsonae).